The primary structure comprises 2049 residues: Non-reducing polyketide synthase hmp3 (2049 aa).

The tract at residues 9–246 is N-terminal acylcarrier protein transacylase (SAT) domain; that stretch reads LYFGDQTDSW…NELSIHALQH (238 aa). Residues 365–793 form the Ketosynthase family 3 (KS3) domain; the sequence is PGRIAIVGMA…GGNASLILED (429 aa). Catalysis depends on for beta-ketoacyl synthase activity residues Cys538, His673, and His712. The segment at 887–1146 is malonyl-CoA:ACP transacylase (MAT) domain; sequence VFVFTGQGSH…VDFVGALGAL (260 aa). The active-site For acyl/malonyl transferase activity is the Ser978. Residues 1265–1404 form an N-terminal hotdog fold region; that stretch reads QQIVEESSSP…AQTLQTSWNR (140 aa). The PKS/mFAS DH domain maps to 1265–1573; the sequence is QQIVEESSSP…FHEVSNNVLD (309 aa). Residues 1269–1572 are product template (PT) domain; the sequence is EESSSPSLHV…SFHEVSNNVL (304 aa). A C-terminal hotdog fold region spans residues 1425–1573; it reads GHRMLPSILY…FHEVSNNVLD (149 aa). In terms of domain architecture, Carrier spans 1626–1704; that stretch reads SSESELFHTI…DLRNEFARSS (79 aa). Position 1663 is an O-(pantetheine 4'-phosphoryl)serine (Ser1663). Residues 1700 to 1747 form a disordered region; that stretch reads FARSSTSTPPSKTFSEFSIVDATPESTRSSSRAPSEKKEPAPASEKSE. A compositionally biased stretch (low complexity) spans 1703-1717; that stretch reads SSTSTPPSKTFSEFS. A compositionally biased stretch (polar residues) spans 1723 to 1732; it reads PESTRSSSRA. Residues 1733 to 1747 show a composition bias toward basic and acidic residues; it reads PSEKKEPAPASEKSE. The segment at 1761–1951 is thioesterase (TE) domain; that stretch reads SPLPSARITL…KRTAIIWAKK (191 aa).

The protein operates within secondary metabolite biosynthesis. Functionally, non-reducing polyketide synthase; part of the gene cluster that mediates the biosynthesis of hypothemycin, a resorcylic acid lactone (RAL) that irreversibly inhibits a subset of protein kinases with a conserved cysteine in the ATP binding site such as human ERK2. The first step is performed by both PKSs hmp3 and hmp8 and leads to the production of 7',8'-dehydrozearalenol (DHZ). The highly reducing PKS hpm8 synthesizes the reduced hexaketide (7S,11S,2E,8E)-7,11-dihydroxy-dodeca-2,8-dienoate, which is transferred downstream to the non-reducing PKS hpm3. Hpm3 then extends the reduced hexaketide to a nonaketide, after which regioselective cyclization and macrolactonization affords DHZ. The next step is the conversion of DHZ into aigialomycin C and is performed by the O-methyltransferase hmp5, the FAD-binding monooxygenase hmp7, and the cytochrome P450 monooxygenase hmp1. The wide substrate tolerance of the hmp5 and hmp7 implies that the reactions from DHZ to aigialomycin C can occur in any order. The steps from aigialomycin C to hypothemycin are less well established. The FAD-linked oxidoreductase hmp9 presumably catalyzes oxidation of the C-6' hydroxyl to a ketone. The timing of this oxidation is important, since the resulting enone functional group is a Michael acceptor that can react spontaneously with glutathione, an abundant metabolite in fungal cells. The glutathione S-transferase hmp2 catalyzes cis-trans isomerization of the 7',8' double bond with equilibrium favoring the trans isomer. The hpm6-encoded transporter might preferentially pump hypothemycin out of the cell relative to the trans isomer aigialomycin A. The cis-to-trans isomerization may be coupled with C-4' hydroxylation, since all known hypothemycin analogs containing the enone functional group also have hydroxyl groups at both C-4' and C-5'. The protein is Non-reducing polyketide synthase hmp3 of Hypomyces subiculosus (Nectria subiculosa).